A 415-amino-acid chain; its full sequence is Elongation factor Tu, chloroplastic (415 aa).

Residues 13–217 (KIHLNVGTIG…HLDLYLPTPR (205 aa)) form the tr-type G domain. The interval 22–29 (GHFSHGKT) is G1. 22-29 (GHFSHGKT) is a GTP binding site. T29 lines the Mg(2+) pocket. Residues 63-67 (NMSIY) form a G2 region. The segment at 84–87 (DCPG) is G3. Residues 84–88 (DCPGH) and 139–142 (NKED) each bind GTP. The interval 139-142 (NKED) is G4. A G5 region spans residues 177–179 (SAL).

Belongs to the TRAFAC class translation factor GTPase superfamily. Classic translation factor GTPase family. EF-Tu/EF-1A subfamily.

It localises to the plastid. It is found in the chloroplast. The catalysed reaction is GTP + H2O = GDP + phosphate + H(+). Its function is as follows. GTP hydrolase that promotes the GTP-dependent binding of aminoacyl-tRNA to the A-site of ribosomes during protein biosynthesis. In Coleochaete orbicularis (Charophycean green alga), this protein is Elongation factor Tu, chloroplastic (tufA).